Consider the following 343-residue polypeptide: Tetraacyldisaccharide 4'-kinase (343 aa).

Position 58-65 (58-65 (VAGGAGKT)) interacts with ATP.

It belongs to the LpxK family.

The enzyme catalyses a lipid A disaccharide + ATP = a lipid IVA + ADP + H(+). The protein operates within glycolipid biosynthesis; lipid IV(A) biosynthesis; lipid IV(A) from (3R)-3-hydroxytetradecanoyl-[acyl-carrier-protein] and UDP-N-acetyl-alpha-D-glucosamine: step 6/6. In terms of biological role, transfers the gamma-phosphate of ATP to the 4'-position of a tetraacyldisaccharide 1-phosphate intermediate (termed DS-1-P) to form tetraacyldisaccharide 1,4'-bis-phosphate (lipid IVA). In Polaromonas naphthalenivorans (strain CJ2), this protein is Tetraacyldisaccharide 4'-kinase.